Reading from the N-terminus, the 263-residue chain is HTH-type transcriptional repressor NanR (263 aa).

Residues 1–25 (MDVMNAFDSQAEDSPTSLGRSLRRR) form a disordered region. Positions 30 to 98 (KKLSEMVEEE…NGERARVSRP (69 aa)) constitute an HTH gntR-type domain. The segment at residues 58-77 (ERELMAFFNVGRPSVREALA) is a DNA-binding region (H-T-H motif).

This sequence belongs to the NanR family.

In terms of biological role, transcriptional repressor that controls expression of the genes required for the catabolism of sialic acids. The protein is HTH-type transcriptional repressor NanR of Salmonella choleraesuis (strain SC-B67).